The chain runs to 304 residues: Recombination-associated protein RdgC (304 aa).

Belongs to the RdgC family.

The protein localises to the cytoplasm. It localises to the nucleoid. In terms of biological role, may be involved in recombination. The sequence is that of Recombination-associated protein RdgC from Shewanella sp. (strain MR-4).